Reading from the N-terminus, the 407-residue chain is Protein ATC1/LIC4 (407 aa).

The protein resides in the cytoplasm. The protein localises to the nucleus. In terms of biological role, involved in cation homeostasis and in the regulation of the cation stress signaling cascades. The sequence is that of Protein ATC1/LIC4 (ATC1) from Eremothecium gossypii (strain ATCC 10895 / CBS 109.51 / FGSC 9923 / NRRL Y-1056) (Yeast).